The following is a 384-amino-acid chain: Heparin lyase I (384 aa).

The N-terminal stretch at 1–21 (MKKQILYLIVLQQLFLCSAYA) is a signal peptide. The residue at position 22 (Q22) is a Blocked amino end (Gln). O-linked (Man...) serine glycosylation occurs at S39.

In terms of assembly, monomer. In terms of processing, the N-terminus is blocked.

It localises to the periplasm. The catalysed reaction is Eliminative cleavage of polysaccharides containing (1-&gt;4)-linked D-glucuronate or L-iduronate residues and (1-&gt;4)-alpha-linked 2-sulfoamino-2-deoxy-6-sulfo-D-glucose residues to give oligosaccharides with terminal 4-deoxy-alpha-D-gluc-4-enuronosyl groups at their non-reducing ends.. Degrades heparin and heparan sulfate. Also implicated in the release of heparin-bound growth factors from the extracellular matrix. This chain is Heparin lyase I, found in Pedobacter heparinus (Flavobacterium heparinum).